The chain runs to 245 residues: Orotidine 5'-phosphate decarboxylase (245 aa).

Substrate is bound by residues aspartate 22, lysine 44, 71-80 (DLKFHDIPNT), threonine 131, arginine 192, glutamine 201, glycine 221, and arginine 222. Lysine 73 acts as the Proton donor in catalysis.

This sequence belongs to the OMP decarboxylase family. Type 1 subfamily. In terms of assembly, homodimer.

The enzyme catalyses orotidine 5'-phosphate + H(+) = UMP + CO2. Its pathway is pyrimidine metabolism; UMP biosynthesis via de novo pathway; UMP from orotate: step 2/2. Its function is as follows. Catalyzes the decarboxylation of orotidine 5'-monophosphate (OMP) to uridine 5'-monophosphate (UMP). The protein is Orotidine 5'-phosphate decarboxylase of Salmonella choleraesuis (strain SC-B67).